The primary structure comprises 527 residues: Cytochrome P450 monooxyhenase eriA (527 aa).

Residues 17–37 (LGVVDLSLLGVGAVIAFAWLF) traverse the membrane as a helical segment. Asn-77, Asn-274, and Asn-297 each carry an N-linked (GlcNAc...) asparagine glycan. A heme-binding site is contributed by Cys-453.

It belongs to the cytochrome P450 family. It depends on heme as a cofactor.

It localises to the membrane. It carries out the reaction cyathadiol + reduced [NADPH--hemoprotein reductase] + O2 = cyathatriol + oxidized [NADPH--hemoprotein reductase] + H2O + H(+). It participates in secondary metabolite biosynthesis. Cytochrome P450 monooxygenase; part of the gene cluster that mediates the biosynthesis of erinacines, cyathane-xylosides that show unique biological activities, including leishmanicidal activity, stimulating activity for nerve growth-factor synthesis, and agonistic activity toward the kappa opioid receptor. Within the pathway, eriA catalyzes C-11 hydroxylation in the presence of the short chain dehydrogenase/reductase (SDR) eriH, which leads to the production of cyathatriol. The first step of the erinacines biosynthesis pathway is catalyzed by the geranylgeranyl diphosphate (GGPP) synthase eriE via conversion of farnesyl pyrophosphate and isopentyl pyrophosphate into geranylgeranyl pyrophosphate (GGPP). GGPP is then substrate of the diterpene cyclase eriG for the production of cyatha-3,12-diene. The cytochrome P450 monooxygenase eriI then hydroxylates cyatha-3,12-diene at C-14 of the seven-membered ring to produce erinacol, which is further hydroxylated at C-15 by the cytochrome P450 monooxygenase eriC to yield cyathadiol. The cytochrome P450 monooxygenase eriA then catalyzes C-11 hydroxylation in the presence of the short chain dehydrogenase/reductase (SDR) eriH, which leads to the production of cyathatriol. The acetyltransferase eriL converts cyathatriol into 11-O-acetyl-cyathatriol. The SDR eriH catalyzes further oxidation of 11-O-acetyl-cyathatriol into 1-O-acetylcyathin A3. Finally, the glycosyl transferase eriJ tranfers xylose from UDP-xylose onto C-14 of 11-O-acetyl-cyathatriol to form eracine Q. EriJ is also able to convert 11-O-acetyl-cyathatriol to eracine Q2 by using UDP-D-glucose as cosubstrate, but at a lower rate. The sequence is that of Cytochrome P450 monooxyhenase eriA from Hericium erinaceus (Lion's mane mushroom).